The chain runs to 211 residues: FMN-dependent NADH:quinone oxidoreductase 2 (211 aa).

Residue 102 to 105 participates in FMN binding; it reads MWNF.

It belongs to the azoreductase type 1 family. In terms of assembly, homodimer. FMN serves as cofactor.

It carries out the reaction 2 a quinone + NADH + H(+) = 2 a 1,4-benzosemiquinone + NAD(+). The enzyme catalyses N,N-dimethyl-1,4-phenylenediamine + anthranilate + 2 NAD(+) = 2-(4-dimethylaminophenyl)diazenylbenzoate + 2 NADH + 2 H(+). Quinone reductase that provides resistance to thiol-specific stress caused by electrophilic quinones. Functionally, also exhibits azoreductase activity. Catalyzes the reductive cleavage of the azo bond in aromatic azo compounds to the corresponding amines. This chain is FMN-dependent NADH:quinone oxidoreductase 2, found in Bacillus thuringiensis subsp. konkukian (strain 97-27).